Consider the following 128-residue polypeptide: Flagellar basal body rod protein FlgB (128 aa).

This sequence belongs to the flagella basal body rod proteins family. The basal body constitutes a major portion of the flagellar organelle and consists of a number of rings mounted on a central rod. In Gram-negative bacteria, at least four rings, L, P, S and M are present, whereas Gram-positive bacteria lack the L and P rings. The rod consists of about 26 subunits of FlgG in the distal portion, and FlgB, FlgC and FlgF build up the proximal portion of the rod with about 6 subunits each. Rod assembly occurs by export via the flagellum-specific pathway of its constituent proteins and by their incorporation into the rod structure in the probable order of FlgB, FlgC, FlgF and FlgG. Another protein, FliE, also assembles onto the stable rod structure.

It is found in the bacterial flagellum basal body. Structural component of flagellum, the bacterial motility apparatus. Part of the rod structure of flagellar basal body. In Cereibacter sphaeroides (strain ATCC 17029 / ATH 2.4.9) (Rhodobacter sphaeroides), this protein is Flagellar basal body rod protein FlgB.